Here is an 897-residue protein sequence, read N- to C-terminus: Beta-galactosidase (897 aa).

Glu459 serves as the catalytic Proton donor. Glu525 (nucleophile) is an active-site residue.

Belongs to the glycosyl hydrolase 2 family.

It catalyses the reaction Hydrolysis of terminal non-reducing beta-D-galactose residues in beta-D-galactosides.. The protein is Beta-galactosidase (cbgA) of Clostridium acetobutylicum.